The primary structure comprises 391 residues: Succinyl-diaminopimelate desuccinylase (391 aa).

Zn(2+) is bound at residue H74. The active site involves D76. D107 contributes to the Zn(2+) binding site. The active-site Proton acceptor is the E141. Zn(2+)-binding residues include E142, E170, and H360.

The protein belongs to the peptidase M20A family. DapE subfamily. In terms of assembly, homodimer. Zn(2+) serves as cofactor. Co(2+) is required as a cofactor.

It catalyses the reaction N-succinyl-(2S,6S)-2,6-diaminopimelate + H2O = (2S,6S)-2,6-diaminopimelate + succinate. It functions in the pathway amino-acid biosynthesis; L-lysine biosynthesis via DAP pathway; LL-2,6-diaminopimelate from (S)-tetrahydrodipicolinate (succinylase route): step 3/3. In terms of biological role, catalyzes the hydrolysis of N-succinyl-L,L-diaminopimelic acid (SDAP), forming succinate and LL-2,6-diaminopimelate (DAP), an intermediate involved in the bacterial biosynthesis of lysine and meso-diaminopimelic acid, an essential component of bacterial cell walls. In Variovorax paradoxus (strain S110), this protein is Succinyl-diaminopimelate desuccinylase.